The sequence spans 91 residues: DNA-directed RNA polymerase subunit omega (91 aa).

This sequence belongs to the RNA polymerase subunit omega family. As to quaternary structure, the RNAP catalytic core consists of 2 alpha, 1 beta, 1 beta' and 1 omega subunit. When a sigma factor is associated with the core the holoenzyme is formed, which can initiate transcription.

The enzyme catalyses RNA(n) + a ribonucleoside 5'-triphosphate = RNA(n+1) + diphosphate. Promotes RNA polymerase assembly. Latches the N- and C-terminal regions of the beta' subunit thereby facilitating its interaction with the beta and alpha subunits. The protein is DNA-directed RNA polymerase subunit omega of Nocardia farcinica (strain IFM 10152).